Here is a 513-residue protein sequence, read N- to C-terminus: Putative ribose/galactose/methyl galactoside import ATP-binding protein 2 (513 aa).

ABC transporter domains lie at 24–260 (LTAE…VGRE) and 270–510 (VPIG…VMEL). Residue 56–63 (GENGAGKS) participates in ATP binding.

The protein belongs to the ABC transporter superfamily. Carbohydrate importer 2 (CUT2) (TC 3.A.1.2) family.

It localises to the cell inner membrane. The catalysed reaction is D-ribose(out) + ATP + H2O = D-ribose(in) + ADP + phosphate + H(+). It catalyses the reaction D-galactose(out) + ATP + H2O = D-galactose(in) + ADP + phosphate + H(+). Functionally, part of an ABC transporter complex involved in carbohydrate import. Could be involved in ribose, galactose and/or methyl galactoside import. Responsible for energy coupling to the transport system. The chain is Putative ribose/galactose/methyl galactoside import ATP-binding protein 2 from Rhizobium meliloti (strain 1021) (Ensifer meliloti).